The sequence spans 173 residues: Photosystem I assembly protein Ycf3 (173 aa).

3 TPR repeats span residues 35–68, 72–105, and 120–153; these read AYLY…EDNQ, GETL…NPKQ, and GRMA…YPGG.

The protein belongs to the Ycf3 family.

It localises to the cellular thylakoid membrane. Essential for the assembly of the photosystem I (PSI) complex. May act as a chaperone-like factor to guide the assembly of the PSI subunits. In Prochlorococcus marinus (strain NATL1A), this protein is Photosystem I assembly protein Ycf3.